The primary structure comprises 363 residues: S-adenosylmethionine:tRNA ribosyltransferase-isomerase (363 aa).

Belongs to the QueA family. Monomer.

The protein localises to the cytoplasm. It carries out the reaction 7-aminomethyl-7-carbaguanosine(34) in tRNA + S-adenosyl-L-methionine = epoxyqueuosine(34) in tRNA + adenine + L-methionine + 2 H(+). It functions in the pathway tRNA modification; tRNA-queuosine biosynthesis. Functionally, transfers and isomerizes the ribose moiety from AdoMet to the 7-aminomethyl group of 7-deazaguanine (preQ1-tRNA) to give epoxyqueuosine (oQ-tRNA). This chain is S-adenosylmethionine:tRNA ribosyltransferase-isomerase, found in Brucella anthropi (strain ATCC 49188 / DSM 6882 / CCUG 24695 / JCM 21032 / LMG 3331 / NBRC 15819 / NCTC 12168 / Alc 37) (Ochrobactrum anthropi).